The chain runs to 93 residues: Cell division protein CrgA (93 aa).

Helical transmembrane passes span 31–51 and 70–90; these read VWFVALFIGLMLIGLVWLMVF and LGPWNYAIAFAFMITGLLLTM.

The protein belongs to the CrgA family.

It is found in the cell membrane. Its function is as follows. Involved in cell division. The protein is Cell division protein CrgA of Mycobacterium avium (strain 104).